Consider the following 609-residue polypeptide: Glutamine--fructose-6-phosphate aminotransferase [isomerizing] (609 aa).

Cys2 (nucleophile; for GATase activity) is an active-site residue. Residues 2–218 (CGIVGAIAQR…EGDIAEITRR (217 aa)) form the Glutamine amidotransferase type-2 domain. 2 SIS domains span residues 286 to 426 (ADEL…LKGL) and 458 to 599 (LAED…VDQP). Lys604 serves as the catalytic For Fru-6P isomerization activity.

Homodimer.

The protein localises to the cytoplasm. It carries out the reaction D-fructose 6-phosphate + L-glutamine = D-glucosamine 6-phosphate + L-glutamate. In terms of biological role, catalyzes the first step in hexosamine metabolism, converting fructose-6P into glucosamine-6P using glutamine as a nitrogen source. The sequence is that of Glutamine--fructose-6-phosphate aminotransferase [isomerizing] from Escherichia coli O6:H1 (strain CFT073 / ATCC 700928 / UPEC).